Consider the following 390-residue polypeptide: GTPase Obg (390 aa).

The region spanning 1–159 (MKFVDEAVIR…RHLRLELLLL (159 aa)) is the Obg domain. A disordered region spans residues 22-42 (SFRTEKYVPRGGPDGGDGGDG). A compositionally biased stretch (gly residues) spans 33-42 (GPDGGDGGDG). The 174-residue stretch at 160–333 (ADVGMLGLPN…LTYNLMTTIE (174 aa)) folds into the OBG-type G domain. GTP contacts are provided by residues 166–173 (GLPNAGKS), 191–195 (FTTLI), 213–216 (DIPG), 283–286 (NKVD), and 314–316 (SAL). Ser173 and Thr193 together coordinate Mg(2+).

It belongs to the TRAFAC class OBG-HflX-like GTPase superfamily. OBG GTPase family. As to quaternary structure, monomer. Mg(2+) serves as cofactor.

It localises to the cytoplasm. An essential GTPase which binds GTP, GDP and possibly (p)ppGpp with moderate affinity, with high nucleotide exchange rates and a fairly low GTP hydrolysis rate. Plays a role in control of the cell cycle, stress response, ribosome biogenesis and in those bacteria that undergo differentiation, in morphogenesis control. This chain is GTPase Obg, found in Photobacterium profundum (strain SS9).